A 338-amino-acid chain; its full sequence is tRNA N6-adenosine threonylcarbamoyltransferase (338 aa).

Residues histidine 110 and histidine 114 each coordinate Fe cation. Residues 132–136, aspartate 165, glycine 178, and asparagine 274 each bind substrate; that span reads ILSGG. Aspartate 298 contacts Fe cation.

Belongs to the KAE1 / TsaD family. Fe(2+) serves as cofactor.

The protein localises to the cytoplasm. The catalysed reaction is L-threonylcarbamoyladenylate + adenosine(37) in tRNA = N(6)-L-threonylcarbamoyladenosine(37) in tRNA + AMP + H(+). In terms of biological role, required for the formation of a threonylcarbamoyl group on adenosine at position 37 (t(6)A37) in tRNAs that read codons beginning with adenine. Is involved in the transfer of the threonylcarbamoyl moiety of threonylcarbamoyl-AMP (TC-AMP) to the N6 group of A37, together with TsaE and TsaB. TsaD likely plays a direct catalytic role in this reaction. The polypeptide is tRNA N6-adenosine threonylcarbamoyltransferase (Borrelia hermsii (strain HS1 / DAH)).